The primary structure comprises 763 residues: Forkhead box protein M1 (763 aa).

The segment at 1–53 (MKTSPRRPLILKRRRLPLPVQNAPSETSEEEPKRSPAQQESNQAEASKEVAES) is disordered. Over residues 36–45 (PAQQESNQAE) the composition is skewed to polar residues. Glycyl lysine isopeptide (Lys-Gly) (interchain with G-Cter in SUMO2) cross-links involve residues lysine 163, lysine 201, and lysine 325. The interval 198-232 (RSIKQEMEEKENCHLEQRQVKVEEPSRPSASWQNS) is disordered. The segment covering 200–223 (IKQEMEEKENCHLEQRQVKVEEPS) has biased composition (basic and acidic residues). Positions 235 to 327 (ERPPYSYMAM…LTLDQVFKPL (93 aa)) form a DNA-binding region, fork-head. Residues 329–351 (PGSPQLPEHLESQQKRPNPELRR) are disordered. Serine 331 is modified (phosphoserine). Residues 336 to 351 (EHLESQQKRPNPELRR) are compositionally biased toward basic and acidic residues. Residue lysine 356 forms a Glycyl lysine isopeptide (Lys-Gly) (interchain with G-Cter in SUMO2) linkage. Serine 376 bears the Phosphoserine; by CHEK2 mark. Residues lysine 422 and lysine 440 each participate in a glycyl lysine isopeptide (Lys-Gly) (interchain with G-Cter in SUMO2) cross-link. Residues 482–711 (PPLEEWPSPA…PGSPEPQVSG (230 aa)) are disordered. Serine 489 carries the phosphoserine; by GSK3 modification. Residues 494–503 (FKEESSHSWE) are compositionally biased toward basic and acidic residues. At serine 522 the chain carries Phosphoserine. Residues 583-592 (DPASQLSYSQ) are compositionally biased toward polar residues. A Phosphothreonine; by CDK1 modification is found at threonine 611. Residues threonine 620, threonine 627, and threonine 662 each carry the phosphothreonine modification. Position 693 is a phosphoserine; by CDK1 (serine 693). Residues serine 730 and serine 739 each carry the phosphoserine; by PLK1 modification.

In terms of assembly, interacts with PINT87aa which is encoded by the circular form of the long non-coding RNA LINC-PINT; the interaction inhibits FOXM1-mediated transcription of PHB2. Post-translationally, phosphorylated in M (mitotic) phase. Phosphorylation by the checkpoint kinase CHEK2 in response to DNA damage increases the FOXM1 protein stability probably stimulating the transcription of genes involved in DNA repair. Phosphorylated by CDK1 in late S and G2 phases, creating docking sites for the POLO box domains of PLK1. Subsequently, PLK1 binds and phosphorylates FOXM1, leading to activation of transcriptional activity and subsequent enhanced expression of key mitotic regulators. Phosphorylated by GSK3B leading to ubiquitination and proteasomal degradation. In terms of processing, ubiquitinated in a FBXW7-dependent manner leading to proteasomal degradation. In terms of tissue distribution, expressed in thymus, testis, small intestine, colon followed by ovary. Appears to be expressed only in adult organs containing proliferating/cycling cells or in response to growth factors. Also expressed in epithelial cell lines derived from tumors. Not expressed in resting cells. Isoform 2 is highly expressed in testis.

The protein resides in the nucleus. Transcription factor regulating the expression of cell cycle genes essential for DNA replication and mitosis. Plays a role in the control of cell proliferation. Also plays a role in DNA break repair, participating in the DNA damage checkpoint response. Promotes transcription of PHB2. This chain is Forkhead box protein M1 (FOXM1), found in Homo sapiens (Human).